The sequence spans 58 residues: Preprotein translocase subunit SecG (58 aa).

The Cytoplasmic segment spans residues 1–33; the sequence is MARRRKYEGLNPFVAAGLIKFSEEGELEKIKLS. Residues 34 to 55 traverse the membrane as a helical segment; it reads PKAAIAISLAIIAAILALNLLL. Topologically, residues 56-58 are extracellular; sequence PPP.

It belongs to the SEC61-beta family. As to quaternary structure, component of the protein translocase complex. Heterotrimer consisting of alpha (SecY), beta (SecG) and gamma (SecE) subunits. Can form oligomers of the heterotrimer.

It is found in the cell membrane. In terms of biological role, involved in protein export. The function of the beta subunit is unknown, but it may be involved in stabilization of the trimeric complex. In Pyrobaculum calidifontis (strain DSM 21063 / JCM 11548 / VA1), this protein is Preprotein translocase subunit SecG.